Reading from the N-terminus, the 134-residue chain is Ribosome-binding factor A (134 aa).

It belongs to the RbfA family. As to quaternary structure, monomer. Binds 30S ribosomal subunits, but not 50S ribosomal subunits or 70S ribosomes.

It is found in the cytoplasm. One of several proteins that assist in the late maturation steps of the functional core of the 30S ribosomal subunit. Associates with free 30S ribosomal subunits (but not with 30S subunits that are part of 70S ribosomes or polysomes). Required for efficient processing of 16S rRNA. May interact with the 5'-terminal helix region of 16S rRNA. This Rhizobium etli (strain CIAT 652) protein is Ribosome-binding factor A.